We begin with the raw amino-acid sequence, 111 residues long: Phosphoribosyl-ATP pyrophosphatase (111 aa).

The protein belongs to the PRA-PH family.

It localises to the cytoplasm. The catalysed reaction is 1-(5-phospho-beta-D-ribosyl)-ATP + H2O = 1-(5-phospho-beta-D-ribosyl)-5'-AMP + diphosphate + H(+). It functions in the pathway amino-acid biosynthesis; L-histidine biosynthesis; L-histidine from 5-phospho-alpha-D-ribose 1-diphosphate: step 2/9. The polypeptide is Phosphoribosyl-ATP pyrophosphatase (Pseudomonas putida (strain GB-1)).